The primary structure comprises 474 residues: MTKKLHIKTWGCQMNEYDSSKMADLLDATHSYQLTDVAEEADVLLLNTCSIREKAQEKVFHQLGRWKLLKEKNPDLIIGVGGCVASQEGEHIRQRAHYVDIIFGPQTLHRLPEMINSVRGDRSPVVDISFPEIEKFDRLPEPRAEGPTAFVSIMEGCNKYCTYCVVPYTRGEEVSRPSDDILFEIAQLAAQGVREVNLLGQNVNAWRGENYDGSTGSFADLLRLVAAIDGIDRIRFTTSHPIEFTDDIIEVYRDTPELVSFLHLPVQSGSDRILNLMGRTHTALEYKAIIRKLRAARPDIQISSDFIVGFPGETTEDFEKTMKLIADVNFDMSYSFIFSARPGTPAADMVDDVPEEEKKQRLYILQERINQQAMAWSRRMLGTTQRILVEGTSRKSIMELSGRTENNRVVNFEGTPDMIGKFVDVEITDVYPNSLRGKVVRTEDEMGLRVAETPESVIARTRKENDLGVGYYQP.

Residues 3–120 form the MTTase N-terminal domain; that stretch reads KKLHIKTWGC…LPEMINSVRG (118 aa). [4Fe-4S] cluster-binding residues include Cys-12, Cys-49, Cys-83, Cys-157, Cys-161, and Cys-164. In terms of domain architecture, Radical SAM core spans 143 to 375; it reads RAEGPTAFVS…QERINQQAMA (233 aa). Residues 378–441 form the TRAM domain; it reads RRMLGTTQRI…PNSLRGKVVR (64 aa).

This sequence belongs to the methylthiotransferase family. MiaB subfamily. Monomer. [4Fe-4S] cluster is required as a cofactor.

It is found in the cytoplasm. It carries out the reaction N(6)-dimethylallyladenosine(37) in tRNA + (sulfur carrier)-SH + AH2 + 2 S-adenosyl-L-methionine = 2-methylsulfanyl-N(6)-dimethylallyladenosine(37) in tRNA + (sulfur carrier)-H + 5'-deoxyadenosine + L-methionine + A + S-adenosyl-L-homocysteine + 2 H(+). In terms of biological role, catalyzes the methylthiolation of N6-(dimethylallyl)adenosine (i(6)A), leading to the formation of 2-methylthio-N6-(dimethylallyl)adenosine (ms(2)i(6)A) at position 37 in tRNAs that read codons beginning with uridine. This chain is tRNA-2-methylthio-N(6)-dimethylallyladenosine synthase, found in Shigella boydii serotype 18 (strain CDC 3083-94 / BS512).